The primary structure comprises 273 residues: Zinc finger protein 80 (273 aa).

C2H2-type zinc fingers lie at residues 49 to 71 (YKCK…QQIH), 77 to 99 (YECQ…VRIH), 103 to 127 (KPCK…HQIH), 133 to 155 (YECS…RMTH), 161 to 183 (FGCK…MKIH), 189 to 211 (YKCS…SMTH), and 217 to 239 (YECK…TRSH).

It belongs to the krueppel C2H2-type zinc-finger protein family.

Its subcellular location is the nucleus. In terms of biological role, may be involved in transcriptional regulation. This is Zinc finger protein 80 (ZNF80) from Pongo pygmaeus (Bornean orangutan).